The following is a 230-amino-acid chain: 2-C-methyl-D-erythritol 4-phosphate cytidylyltransferase (230 aa).

The protein belongs to the IspD/TarI cytidylyltransferase family. IspD subfamily.

The catalysed reaction is 2-C-methyl-D-erythritol 4-phosphate + CTP + H(+) = 4-CDP-2-C-methyl-D-erythritol + diphosphate. It participates in isoprenoid biosynthesis; isopentenyl diphosphate biosynthesis via DXP pathway; isopentenyl diphosphate from 1-deoxy-D-xylulose 5-phosphate: step 2/6. Functionally, catalyzes the formation of 4-diphosphocytidyl-2-C-methyl-D-erythritol from CTP and 2-C-methyl-D-erythritol 4-phosphate (MEP). This chain is 2-C-methyl-D-erythritol 4-phosphate cytidylyltransferase, found in Nocardia farcinica (strain IFM 10152).